The chain runs to 265 residues: Small ribosomal subunit protein uS5 (265 aa).

Over residues 1–15 the composition is skewed to low complexity; the sequence is MADTQPAQEAPAADA. Residues 1–44 form a disordered region; the sequence is MADTQPAQEAPAADAPRAERNFGRGRGGRGGRGRGRGGPGEEKE. A compositionally biased stretch (basic residues) spans 26–35; it reads RGGRGGRGRG. Residues 88–151 form the S5 DRBM domain; the sequence is LHDEMMKIYP…IAAKLNIVPV (64 aa). The tract at residues 245 to 265 is disordered; sequence TEPSRDPTDEHGELLAEMTTA. The span at 246 to 258 shows a compositional bias: basic and acidic residues; that stretch reads EPSRDPTDEHGEL.

This sequence belongs to the universal ribosomal protein uS5 family.

Component of the ribosome, a large ribonucleoprotein complex responsible for the synthesis of proteins in the cell. The small ribosomal subunit (SSU) binds messenger RNAs (mRNAs) and translates the encoded message by selecting cognate aminoacyl-transfer RNA (tRNA) molecules. The large subunit (LSU) contains the ribosomal catalytic site termed the peptidyl transferase center (PTC), which catalyzes the formation of peptide bonds, thereby polymerizing the amino acids delivered by tRNAs into a polypeptide chain. The nascent polypeptides leave the ribosome through a tunnel in the LSU and interact with protein factors that function in enzymatic processing, targeting, and the membrane insertion of nascent chains at the exit of the ribosomal tunnel. Plays a role in the assembly and function of the 40S ribosomal subunit. Mutations in this protein affects the control of translational fidelity. Involved in nucleolar processing of pre-18S ribosomal RNA and ribosome assembly. In Leishmania amazonensis, this protein is Small ribosomal subunit protein uS5.